Reading from the N-terminus, the 91-residue chain is Probable Fe(2+)-trafficking protein (91 aa).

Belongs to the Fe(2+)-trafficking protein family.

Its function is as follows. Could be a mediator in iron transactions between iron acquisition and iron-requiring processes, such as synthesis and/or repair of Fe-S clusters in biosynthetic enzymes. The protein is Probable Fe(2+)-trafficking protein of Shewanella denitrificans (strain OS217 / ATCC BAA-1090 / DSM 15013).